The sequence spans 188 residues: uncharacterized protein (188 aa).

This is an uncharacterized protein from Methanocaldococcus jannaschii (strain ATCC 43067 / DSM 2661 / JAL-1 / JCM 10045 / NBRC 100440) (Methanococcus jannaschii).